A 480-amino-acid chain; its full sequence is Acyl-lipid (8-3)-desaturase (480 aa).

The interval 1 to 30 is disordered; it reads MAPHSADTAGLVPSDELRLRTSNSKGPEQE. In terms of domain architecture, Cytochrome b5 heme-binding spans 33–107; it reads LKKYTLEDVS…LAKYCIGELV (75 aa). Residues H68 and H90 each contribute to the heme site. 2 consecutive transmembrane segments (helical) span residues 151-171 and 173-193; these read IHPH…ASYY and AFFW…MGFF. Residues 203-207 carry the Histidine box-1 motif; that stretch reads HDGNH. The Histidine box-2 signature appears at 238–243; it reads HVVGHH. A run of 3 helical transmembrane segments spans residues 280–300, 322–342, and 348–368; these read IYLA…DDFL, IFFQ…SVYG, and TFLA…AFLF. The short motif at 419 to 423 is the Histidine box-3 element; that stretch reads QIEHH.

It belongs to the fatty acid desaturase type 1 family. The cofactor is Fe(2+).

Its subcellular location is the membrane. It catalyses the reaction an (8Z,11Z,14Z)-icosatrienoyl-containing glycerolipid + 2 Fe(II)-[cytochrome b5] + O2 + 2 H(+) = (5Z,8Z,11Z,14Z)-eicosatetraenoyl-containing glycerolipid + 2 Fe(III)-[cytochrome b5] + 2 H2O. The catalysed reaction is an (8Z,11Z,14Z,17Z)-eicosatetraenoyl-containing glycerolipid + 2 Fe(II)-[cytochrome b5] + O2 + 2 H(+) = a (5Z,8Z,11Z,14Z,17Z)-eicosapentaenoyl-containing glycerolipid + 2 Fe(III)-[cytochrome b5] + 2 H2O. Functionally, fatty acid desaturase that introduces a cis double bond at the 5-position in 20-carbon polyunsaturated fatty acids incorporated in a glycerolipid that contain a Delta(8) double bond. The chain is Acyl-lipid (8-3)-desaturase from Physcomitrium patens (Spreading-leaved earth moss).